Reading from the N-terminus, the 64-residue chain is Large ribosomal subunit protein bL35 (64 aa).

Positions methionine 1–glycine 17 are enriched in basic residues. Residues methionine 1–glycine 64 are disordered. Residues leucine 21–glutamate 33 show a composition bias toward basic and acidic residues.

It belongs to the bacterial ribosomal protein bL35 family.

The chain is Large ribosomal subunit protein bL35 from Corynebacterium kroppenstedtii (strain DSM 44385 / JCM 11950 / CIP 105744 / CCUG 35717).